Here is a 1105-residue protein sequence, read N- to C-terminus: Tubulin-folding cofactor D (1105 aa).

Asn122 and Asn126 each carry an N-linked (GlcNAc...) asparagine glycan. HEAT repeat units lie at residues 308-345 (IYLEVIVDFLLSSVSDIDSFVRWSAAKGLAKIISRLPW), 347-385 (LAEQVIDAIIELMTENMFLNPIENTVNISITSPLVWHGA), 401-446 (SKCL…CYSK), and 452-489 (LQTNLILCLLQTVLFDNEINVRRAATAALFEVIGRHAS). A glycan (N-linked (GlcNAc...) asparagine) is linked at Asn373. Asn721, Asn883, and Asn1083 each carry an N-linked (GlcNAc...) asparagine glycan.

As to quaternary structure, interacts with alp21.

The protein localises to the cytoplasm. The protein resides in the cytoskeleton. In terms of biological role, has a function in the folding of beta-tubulin. Microtubule-associated protein that is essential to direct polarized cell growth and to position the nucleus and septum to the center of the cell during mitosis. This chain is Tubulin-folding cofactor D (alp1), found in Schizosaccharomyces pombe (strain 972 / ATCC 24843) (Fission yeast).